Here is a 291-residue protein sequence, read N- to C-terminus: 4-hydroxy-tetrahydrodipicolinate synthase (291 aa).

Position 45 (Thr-45) interacts with pyruvate. Catalysis depends on Tyr-133, which acts as the Proton donor/acceptor. The active-site Schiff-base intermediate with substrate is Lys-161. Ile-203 is a binding site for pyruvate.

This sequence belongs to the DapA family. As to quaternary structure, homotetramer; dimer of dimers.

Its subcellular location is the cytoplasm. The catalysed reaction is L-aspartate 4-semialdehyde + pyruvate = (2S,4S)-4-hydroxy-2,3,4,5-tetrahydrodipicolinate + H2O + H(+). It participates in amino-acid biosynthesis; L-lysine biosynthesis via DAP pathway; (S)-tetrahydrodipicolinate from L-aspartate: step 3/4. Functionally, catalyzes the condensation of (S)-aspartate-beta-semialdehyde [(S)-ASA] and pyruvate to 4-hydroxy-tetrahydrodipicolinate (HTPA). This is 4-hydroxy-tetrahydrodipicolinate synthase from Neisseria meningitidis serogroup C (strain 053442).